A 174-amino-acid polypeptide reads, in one-letter code: Ubiquitin-like protein 4B (174 aa).

The Ubiquitin-like domain maps to 1 to 76 (MFLTVKLLLG…INVIMQPLEK (76 aa)). Residues 141–156 (EPHVEPAGERELEAKA) show a composition bias toward basic and acidic residues. The segment at 141–174 (EPHVEPAGERELEAKARPQSSCDMEEKEEAAADQ) is disordered. The segment covering 163–174 (DMEEKEEAAADQ) has biased composition (acidic residues).

It is found in the cytoplasm. This Homo sapiens (Human) protein is Ubiquitin-like protein 4B (UBL4B).